The chain runs to 360 residues: Farnesyl pyrophosphate synthase (360 aa).

Positions 52, 55, and 90 each coordinate isopentenyl diphosphate. Mg(2+)-binding residues include aspartate 97 and aspartate 101. Arginine 106 provides a ligand contact to dimethylallyl diphosphate. Arginine 107 is a binding site for isopentenyl diphosphate. The dimethylallyl diphosphate site is built by lysine 194, threonine 195, glutamine 237, lysine 254, and lysine 263.

Belongs to the FPP/GGPP synthase family. Mg(2+) serves as cofactor.

The catalysed reaction is isopentenyl diphosphate + dimethylallyl diphosphate = (2E)-geranyl diphosphate + diphosphate. The enzyme catalyses isopentenyl diphosphate + (2E)-geranyl diphosphate = (2E,6E)-farnesyl diphosphate + diphosphate. The protein operates within isoprenoid biosynthesis; farnesyl diphosphate biosynthesis; farnesyl diphosphate from geranyl diphosphate and isopentenyl diphosphate: step 1/1. It participates in isoprenoid biosynthesis; geranyl diphosphate biosynthesis; geranyl diphosphate from dimethylallyl diphosphate and isopentenyl diphosphate: step 1/1. Farnesyl pyrophosphate synthase; part of the second module of ergosterol biosynthesis pathway that includes the middle steps of the pathway. The second module involves the formation of farnesyl diphosphate, which is also an important intermediate in the biosynthesis of ubiquinone, dolichol, heme and prenylated proteins. This module also plays a key role in the biosynthesis of triterpenes such as ganoderic acids (GA), a group of highly oxygenated lanostane-type triterpenoids which are well recognized as a main group of unique bioactive compounds in the medicinal mushroom Ganoderma lucidum. Activity by the mevalonate kinase first converts mevalonate into 5-phosphomevalonate. 5-phosphomevalonate is then further converted to 5-diphosphomevalonate by the phosphomevalonate kinase. The diphosphomevalonate decarboxylase MVD then produces isopentenyl diphosphate. The isopentenyl-diphosphate delta-isomerase then catalyzes the 1,3-allylic rearrangement of the homoallylic substrate isopentenyl (IPP) to its highly electrophilic allylic isomer, dimethylallyl diphosphate (DMAPP). Finally the farnesyl diphosphate synthase FPS catalyzes the sequential condensation of isopentenyl pyrophosphate with dimethylallyl pyrophosphate, and then with the resultant geranylpyrophosphate to the ultimate product farnesyl pyrophosphate. The protein is Farnesyl pyrophosphate synthase of Ganoderma lucidum (Ling zhi medicinal fungus).